Consider the following 189-residue polypeptide: Elongation factor P (189 aa).

The protein belongs to the elongation factor P family.

The protein resides in the cytoplasm. The protein operates within protein biosynthesis; polypeptide chain elongation. Involved in peptide bond synthesis. Stimulates efficient translation and peptide-bond synthesis on native or reconstituted 70S ribosomes in vitro. Probably functions indirectly by altering the affinity of the ribosome for aminoacyl-tRNA, thus increasing their reactivity as acceptors for peptidyl transferase. The sequence is that of Elongation factor P from Sinorhizobium fredii (strain NBRC 101917 / NGR234).